The chain runs to 251 residues: Leucine-rich repeat and calponin homology domain-containing protein 1 (251 aa).

A disordered region spans residues 73-97 (SNGSEYSPNEIRANSPAISPTANST). S87 and S91 each carry phosphoserine. A compositionally biased stretch (polar residues) spans 88 to 97 (PAISPTANST). T123 is modified (phosphothreonine). The 114-residue stretch at 131 to 244 (MREEKELVEH…ITVQALLDVT (114 aa)) folds into the Calponin-homology (CH) domain.

In terms of assembly, interacts (via LRR repeats) with unphosphorylated DOCK8 (via DHR-2 domain); the interaction prevents the interaction between DOCK8 and CDC42.

It is found in the cytoplasm. Acts as a negative regulator of GTPase CDC42 by sequestering CDC42-guanine exchange factor DOCK8. Probably by preventing CDC42 activation, negatively regulates CD4(+) T-cell migration. This chain is Leucine-rich repeat and calponin homology domain-containing protein 1, found in Felis catus (Cat).